The following is a 239-amino-acid chain: tRNA (guanine-N(7)-)-methyltransferase (239 aa).

Residues glutamate 69, glutamate 94, aspartate 121, and aspartate 144 each contribute to the S-adenosyl-L-methionine site. Residue aspartate 144 is part of the active site. Lysine 148 is a substrate binding site. The tract at residues 150–155 (RHNKRR) is interaction with RNA. Substrate contacts are provided by residues aspartate 180 and 217–220 (TKFE).

Belongs to the class I-like SAM-binding methyltransferase superfamily. TrmB family. Monomer.

It carries out the reaction guanosine(46) in tRNA + S-adenosyl-L-methionine = N(7)-methylguanosine(46) in tRNA + S-adenosyl-L-homocysteine. It participates in tRNA modification; N(7)-methylguanine-tRNA biosynthesis. Catalyzes the formation of N(7)-methylguanine at position 46 (m7G46) in tRNA. The protein is tRNA (guanine-N(7)-)-methyltransferase of Yersinia pestis (strain Pestoides F).